Reading from the N-terminus, the 366-residue chain is MQTLKVDLGERSYPIHIGEGLLDQPELLAPHIAGRQVAIISNETVAPLYLERLNRSLAAYSVISVILPDGEAHKNWETLQLIFDGLLTARHDRRTTVIALGGGVIGDMAGFAAACYQRGVDFIQVPTTLLSQVDSSVGGKTGINHPLGKNMVGAFYQPQAVLIDTATLNTLPPRELSAGLAEVIKYGLICDEPFLTWLEEHVDALRNLDQVALTEAISRSCAAKALVVNADERESGVRATLNLGHTFGHAIETHMGYGVWLHGEAVAAGTVMALDMSQRLGWISAQERDRGIRLFQRAGLPVIPPEEMTEADFLEHMAIDKKVIDGRLRLVLLRHMGEAVVTDDYPKEILQATLGADYRALAQLKG.

NAD(+) contacts are provided by residues 69–74 (DGEAHK), 103–107 (GVIGD), 127–128 (TT), Lys-140, Lys-149, and 167–170 (TLNT). Glu-182, His-245, and His-262 together coordinate Zn(2+).

It belongs to the sugar phosphate cyclases superfamily. Dehydroquinate synthase family. The cofactor is Co(2+). Zn(2+) serves as cofactor. Requires NAD(+) as cofactor.

It is found in the cytoplasm. It carries out the reaction 7-phospho-2-dehydro-3-deoxy-D-arabino-heptonate = 3-dehydroquinate + phosphate. It functions in the pathway metabolic intermediate biosynthesis; chorismate biosynthesis; chorismate from D-erythrose 4-phosphate and phosphoenolpyruvate: step 2/7. Its function is as follows. Catalyzes the conversion of 3-deoxy-D-arabino-heptulosonate 7-phosphate (DAHP) to dehydroquinate (DHQ). The polypeptide is 3-dehydroquinate synthase (Pseudomonas fluorescens (strain SBW25)).